The following is a 316-amino-acid chain: Iron-sulfur cluster assembly SufBD family protein MJ0034 (316 aa).

It belongs to the iron-sulfur cluster assembly SufBD family.

The sequence is that of Iron-sulfur cluster assembly SufBD family protein MJ0034 from Methanocaldococcus jannaschii (strain ATCC 43067 / DSM 2661 / JAL-1 / JCM 10045 / NBRC 100440) (Methanococcus jannaschii).